The chain runs to 1055 residues: Ubiquitin carboxyl-terminal hydrolase 25 (1055 aa).

The UBA-like domain maps to 14–57 (QKHQQTFLNQLREITGINDTQILQQALKDSNGNLELAVAFLTAK). Positions 77 to 102 (NDRYISVGSQADTNVIDLTGDDKDDL) are SUMO interaction domain (SIM). The residue at position 85 (serine 85) is a Phosphoserine. The Required for SUMO paralog-specific binding signature appears at 89-95 (TNVIDLT). 2 UIM domains span residues 97–116 (DDKD…SNRA) and 123–140 (TDEE…IAEN). Residue lysine 99 forms a Glycyl lysine isopeptide (Lys-Gly) (interchain with G-Cter in SUMO); alternate linkage. A Glycyl lysine isopeptide (Lys-Gly) (interchain with G-Cter in ubiquitin); alternate cross-link involves residue lysine 99. A USP domain is found at 169–657 (VGLKNVGNTC…SAYCLMYIND (489 aa)). Cysteine 178 is a catalytic residue. The tract at residues 464–507 (VCTSPVDDIDASSPPSGSIPSQTLPSTTEQQGALSSELPSTSPS) is disordered. A compositionally biased stretch (polar residues) spans 476–496 (SPPSGSIPSQTLPSTTEQQGA). Low complexity predominate over residues 497 to 507 (LSSELPSTSPS). Positions 541-578 (TEEELSVLESCLHRWRTEIENDTRDLQESISRIHRTIE) form a coiled coil. Active-site residues include histidine 599 and histidine 607. Positions 684–717 (DLRDFVEEDNQRFEKELEEWDAQLAQKALQEKLL) form a coiled coil. Residues 727–749 (TSVTTAQAAGDPEYLEQPSRSDF) are disordered. Tyrosine 740 carries the post-translational modification Phosphotyrosine.

The protein belongs to the peptidase C19 family. Homotetramer, inhibited form. Homodimer, active form. Interacts with ACTA1 (via its C-terminus); the interaction occurs for all isoforms but is strongest for isoform USP25m in muscle differentiating cells. Interacts (isoform USP25m only) with MYBPC1; the interaction prevents proteasomal degradation of MYBPC1. Interacts (isoform USP25m only) with FLNC (via filament repeats 17-18, 20-21 and 24). Interacts with GAPDH. Interacts with SUMO3; the interaction sumoylates efficiently USP25. Interacts with SUMO2; the interaction sumoylates efficiently USP25. Interacts with SUMO1; the interaction only weakly sumoylates USP25. Interacts with SYK; phosphorylates USP25 and regulates USP25 intracellular levels. In terms of processing, acetylated. Sumoylation impairs binding to and hydrolysis of ubiquitin chains. Sumoylated preferentially with SUMO2 or SUMO3. Desumoylated by SENP1. Polyubiquitinated by SMURF1 by promoting the 'Lys-48'-linkage leading to proteasomal degradation. Post-translationally, preferentially monoubiquitinated but can also be polyubiquitinated. Autodeubiquitinated. Ubiquitination activates the enzymatic activity either by preventing sumoylation or by allowing novel interactions. In terms of processing, phosphorylation in the C-terminal by SYK regulates USP25 cellular levels. In terms of tissue distribution, isoform USP25a is found in most adult and fetal tissues; expression is moderately high in testis, pancreas, kidney, skeletal muscle, liver, lung, placenta, heart, but very low in peripheral blood, colon, small intestine, ovary, prostate, thymus and spleen. Expressed in the brain, with high levels in the cerebral cortex. Isoform USP25b is found in all tissues except heart and skeletal muscle. Isoform USP25m is heart and skeletal muscle specific.

It localises to the cytoplasm. It is found in the nucleus. The enzyme catalyses Thiol-dependent hydrolysis of ester, thioester, amide, peptide and isopeptide bonds formed by the C-terminal Gly of ubiquitin (a 76-residue protein attached to proteins as an intracellular targeting signal).. Deubiquitinating enzyme that hydrolyzes ubiquitin moieties conjugated to substrates and thus, functions in various biological processes including inflammation and immune response. Modulates the Wnt/beta-catenin pathway by deubiquitinating and stabilizing tankyrases TNKS1 and TNKS2. Regulates KEAP1-NRF2 axis in the defense against oxidative assaults by deubiquitinating KEAP1 and protecting it from degradation leading to degradation of the NRF2 transcription factor that is responsible for mounting an anti-oxidation gene expression program. Positively regulates RNA virus-induced innate signaling by interacting with and deubiquitinating ERLIN1 and ERLIN2. In turn, restricts virus production by regulating cholesterol biosynthetic flux. Acts as a negative regulator of interleukin-17-mediated signaling and inflammation through the removal of 'Lys-63'-linked ubiquitination of TRAF5 and TRAF6. Prevents the ubiquitination and degradation of TRAF3 to reduce the phosphorylation levels of JNK and P38, the secretion of IL-1B and to induce endotoxin tolerance. Functionally, the muscle-specific isoform (USP25m) may have a role in the regulation of muscular differentiation and function. The polypeptide is Ubiquitin carboxyl-terminal hydrolase 25 (USP25) (Homo sapiens (Human)).